The chain runs to 276 residues: Omega-amidase NIT2-B (276 aa).

Residues 4–248 form the CN hydrolase domain; sequence FRLSLVQFLV…ETVISADIDL (245 aa). Glutamate 43 acts as the Proton acceptor in catalysis. Lysine 112 (proton donor) is an active-site residue. Cysteine 153 (nucleophile) is an active-site residue.

The protein belongs to the carbon-nitrogen hydrolase superfamily. NIT1/NIT2 family. In terms of assembly, homodimer.

The protein resides in the cytoplasm. It catalyses the reaction 2-oxoglutaramate + H2O = 2-oxoglutarate + NH4(+). The catalysed reaction is 2-oxosuccinamate + H2O = oxaloacetate + NH4(+). Has omega-amidase activity. The role of omega-amidase is to remove potentially toxic intermediates by converting 2-oxoglutaramate and 2-oxosuccinamate to biologically useful 2-oxoglutarate and oxaloacetate, respectively. This chain is Omega-amidase NIT2-B (nit2b), found in Xenopus laevis (African clawed frog).